A 543-amino-acid polypeptide reads, in one-letter code: Nucleoside-triphosphatase ntp-1 (543 aa).

A helical membrane pass occupies residues 40-60 (VYGFLLTCTCLLLILTIIPMS). The Proton acceptor role is filled by glutamate 212. The chain crosses the membrane as a helical span at residues 497 to 517 (QISNFFSFFVILIIVLAVALY).

The protein belongs to the GDA1/CD39 NTPase family.

Its subcellular location is the golgi apparatus membrane. It catalyses the reaction a ribonucleoside 5'-triphosphate + H2O = a ribonucleoside 5'-diphosphate + phosphate + H(+). Seems to be able to hydrolyze CTP, ATP and UTP. The sequence is that of Nucleoside-triphosphatase ntp-1 from Caenorhabditis elegans.